Here is a 158-residue protein sequence, read N- to C-terminus: G-protein-signaling modulator 3 (158 aa).

Residues 1–53 (MEAERPQEDGEQSLPQDDQGWPPVNSTARPWRSAPPSPPPPGTRHTALGPRSG) are disordered. Phosphoserine is present on residues S33 and S37. Residues 33 to 42 (SAPPSPPPPG) show a composition bias toward pro residues. The segment covering 43–53 (TRHTALGPRSG) has biased composition (low complexity). Phosphoserine occurs at positions 54 and 57. T60 is subject to Phosphothreonine. The GoLoco 1 domain occupies 60–82 (TELLLDLVAEAQSRRLEEQRAAF). A disordered region spans residues 78–97 (QRAAFHTPKVPPSLAPTPPR). The segment covering 86-96 (KVPPSLAPTPP) has biased composition (pro residues). 2 consecutive GoLoco domains span residues 102-124 (KEQL…RSDP) and 130-153 (GQEL…RSRP).

The protein localises to the cytoplasm. Functionally, interacts with subunit of G(i) alpha proteins and regulates the activation of G(i) alpha proteins. The chain is G-protein-signaling modulator 3 (Gpsm3) from Rattus norvegicus (Rat).